The chain runs to 563 residues: (R)-mandelonitrile lyase 1 (563 aa).

Residues methionine 1–serine 27 form the signal peptide. Residues threonine 63–serine 64, glutamate 82–arginine 83, valine 129, threonine 133, and asparagine 137–valine 140 contribute to the FAD site. 2 N-linked (GlcNAc...) asparagine glycosylation sites follow: asparagine 145 and asparagine 162. FAD is bound at residue valine 244. Cysteine 355 is a binding site for substrate. N-linked (GlcNAc...) asparagine glycosylation is present at asparagine 379. Cysteine 426 and cysteine 477 form a disulfide bridge. Substrate is bound at residue tyrosine 484. FAD-binding positions include tryptophan 485–histidine 486 and glycine 514. The active-site Proton donor is the histidine 486. Histidine 524 functions as the Proton acceptor in the catalytic mechanism. FAD is bound at residue proline 525–glutamine 526.

This sequence belongs to the GMC oxidoreductase family. As to quaternary structure, monomer. It depends on FAD as a cofactor. In terms of processing, glycosylated. In terms of tissue distribution, seeds. Localized within cotyledonary parenchyma cells.

The protein resides in the vacuole. The protein localises to the aleurone grain. The enzyme catalyses (R)-mandelonitrile = benzaldehyde + hydrogen cyanide. Its function is as follows. Involved in cyanogenesis, the release of HCN from injured tissues. Catalyzes the stereospecific addition of HCN to a variety of aldehydes in vitro. It is a major seed constituent, and could have the additional role of a storage form for reduced nitrogen. The protein is (R)-mandelonitrile lyase 1 (MDL1) of Prunus serotina (Black cherry).